Here is a 479-residue protein sequence, read N- to C-terminus: U2 small nuclear ribonucleoprotein auxiliary factor 35 kDa subunit-related protein 1 (479 aa).

The tract at residues 1–63 (MAALEKMTFP…EDTFIEEQQL (63 aa)) is disordered. The segment covering 20–37 (SHKKYRAALKKEKRKKRR) has biased composition (basic residues). The segment covering 50–63 (QEEEEDTFIEEQQL) has biased composition (acidic residues). A Glycyl lysine isopeptide (Lys-Gly) (interchain with G-Cter in SUMO2) cross-link involves residue lysine 67. The C3H1-type 1 zinc finger occupies 171 to 199 (EKDRANCPFYSKTGACRFGDRCSRKHNFP). An RRM domain is found at 203–309 (PTLLIKSMFT…RQLQCEFCPV (107 aa)). The C3H1-type 2 zinc finger occupies 311–338 (RWKMAICGLFEIQQCPRGKHCNFLHVFR). Serine 354 is subject to Phosphoserine. The disordered stretch occupies residues 356–479 (DQTGSSFGKN…DRTVQSPQSK (124 aa)). 2 stretches are compositionally biased toward basic and acidic residues: residues 365-379 (NSER…DHYY) and 388-403 (PSPD…SERK). Serine 389 is modified (phosphoserine). Composition is skewed to basic residues over residues 404–417 (KSSH…KRTS) and 442–451 (SQSRRSHRSR).

Its subcellular location is the nucleus. The chain is U2 small nuclear ribonucleoprotein auxiliary factor 35 kDa subunit-related protein 1 from Homo sapiens (Human).